Here is a 66-residue protein sequence, read N- to C-terminus: Protein I177L (66 aa).

The protein belongs to the asfivirus I177L family.

The protein localises to the virion. In African swine fever virus (isolate Tick/Malawi/Lil 20-1/1983) (ASFV), this protein is Protein I177L.